The following is a 3075-amino-acid chain: Laminin subunit alpha-1 (3075 aa).

An N-terminal signal peptide occupies residues Met-1 to Cys-17. The region spanning Arg-18–Met-269 is the Laminin N-terminal domain. Disulfide bonds link Cys-270-Cys-279, Cys-272-Cys-290, Cys-292-Cys-301, Cys-304-Cys-324, Cys-327-Cys-336, Cys-329-Cys-361, Cys-364-Cys-373, Cys-376-Cys-394, Cys-397-Cys-409, Cys-399-Cys-427, Cys-429-Cys-438, Cys-441-Cys-451, Cys-454-Cys-467, Cys-456-Cys-471, Cys-473-Cys-482, and Cys-485-Cys-500. Laminin EGF-like domains follow at residues Cys-270 to Ala-326, Cys-327 to Pro-396, Cys-397 to Ser-453, and Cys-454 to Glu-502. A Laminin EGF-like 5; first part domain is found at Cys-503 to Cys-512. Residues Ser-516–His-708 enclose the Laminin IV type A 1 domain. Asn-665 is a glycosylation site (N-linked (GlcNAc...) asparagine). In terms of domain architecture, Laminin EGF-like 5; second part spans Cys-709–Pro-741. 32 disulfides stabilise this stretch: Cys-742/Cys-751, Cys-744/Cys-757, Cys-760/Cys-769, Cys-772/Cys-788, Cys-791/Cys-806, Cys-793/Cys-816, Cys-819/Cys-828, Cys-831/Cys-846, Cys-849/Cys-863, Cys-851/Cys-870, Cys-873/Cys-882, Cys-885/Cys-899, Cys-902/Cys-914, Cys-904/Cys-921, Cys-923/Cys-932, Cys-935/Cys-948, Cys-951/Cys-963, Cys-953/Cys-969, Cys-971/Cys-980, Cys-983/Cys-995, Cys-998/Cys-1007, Cys-1000/Cys-1014, Cys-1016/Cys-1025, Cys-1028/Cys-1041, Cys-1044/Cys-1056, Cys-1046/Cys-1063, Cys-1065/Cys-1074, Cys-1077/Cys-1087, Cys-1090/Cys-1102, Cys-1092/Cys-1118, Cys-1120/Cys-1129, and Cys-1132/Cys-1147. 8 consecutive Laminin EGF-like domains span residues Cys-742–Pro-790, Cys-791–Pro-848, Cys-849–Ala-901, Cys-902–Pro-950, Cys-951–Pro-997, Cys-998–Ala-1043, Cys-1044–Pro-1089, and Cys-1090–Pro-1149. A Laminin EGF-like 14; first part domain is found at Cys-1150 to Cys-1159. The 192-residue stretch at Val-1170–Asn-1361 folds into the Laminin IV type A 2 domain. Residues Cys-1362–Pro-1402 form the Laminin EGF-like 14; second part domain. Intrachain disulfides connect Cys-1403–Cys-1412, Cys-1405–Cys-1419, Cys-1422–Cys-1431, Cys-1434–Cys-1449, Cys-1452–Cys-1466, Cys-1454–Cys-1476, Cys-1479–Cys-1488, Cys-1491–Cys-1506, Cys-1509–Cys-1521, Cys-1511–Cys-1528, Cys-1530–Cys-1539, and Cys-1542–Cys-1553. 3 Laminin EGF-like domains span residues Cys-1403 to Leu-1451, Cys-1452 to Lys-1508, and Cys-1509 to Ser-1555. A domain II and I region spans residues Cys-1556 to Ile-2116. N-linked (GlcNAc...) asparagine glycans are attached at residues Asn-1579, Asn-1689, Asn-1717, Asn-2047, and Asn-2243. A coiled-coil region spans residues Met-1706 to Leu-1783. 5 consecutive Laminin G-like domains span residues Lys-2117–Cys-2297, Asp-2305–Cys-2481, Ile-2486–Cys-2673, Ala-2713–Cys-2885, and Gln-2890–Cys-3070. Cystine bridges form between Cys-2271–Cys-2297 and Cys-2457–Cys-2481. Positions Arg-2534–Asp-2536 match the Cell attachment site motif. 3 disulfides stabilise this stretch: Cys-2646–Cys-2673, Cys-2860–Cys-2885, and Cys-3039–Cys-3070.

As to quaternary structure, laminin is a complex glycoprotein, consisting of three different polypeptide chains (alpha, beta, gamma), which are bound to each other by disulfide bonds into a cross-shaped molecule comprising one long and three short arms with globules at each end. Alpha-1 is a subunit of laminin-1 (laminin-111 or EHS laminin) and laminin-3 (laminin-121 or S-laminin). Tyrosine phosphorylated by PKDCC/VLK.

The protein resides in the secreted. The protein localises to the extracellular space. It is found in the extracellular matrix. Its subcellular location is the basement membrane. Functionally, binding to cells via a high affinity receptor, laminin is thought to mediate the attachment, migration and organization of cells into tissues during embryonic development by interacting with other extracellular matrix components. The sequence is that of Laminin subunit alpha-1 (LAMA1) from Homo sapiens (Human).